A 375-amino-acid polypeptide reads, in one-letter code: Succinyl-diaminopimelate desuccinylase (375 aa).

Residue His-66 coordinates Zn(2+). The active site involves Asp-68. A Zn(2+)-binding site is contributed by Asp-99. The active-site Proton acceptor is the Glu-133. Zn(2+) is bound by residues Glu-134, Glu-162, and His-348.

This sequence belongs to the peptidase M20A family. DapE subfamily. In terms of assembly, homodimer. Zn(2+) is required as a cofactor. Requires Co(2+) as cofactor.

The catalysed reaction is N-succinyl-(2S,6S)-2,6-diaminopimelate + H2O = (2S,6S)-2,6-diaminopimelate + succinate. Its pathway is amino-acid biosynthesis; L-lysine biosynthesis via DAP pathway; LL-2,6-diaminopimelate from (S)-tetrahydrodipicolinate (succinylase route): step 3/3. Its function is as follows. Catalyzes the hydrolysis of N-succinyl-L,L-diaminopimelic acid (SDAP), forming succinate and LL-2,6-diaminopimelate (DAP), an intermediate involved in the bacterial biosynthesis of lysine and meso-diaminopimelic acid, an essential component of bacterial cell walls. This Shigella boydii serotype 18 (strain CDC 3083-94 / BS512) protein is Succinyl-diaminopimelate desuccinylase.